Here is a 196-residue protein sequence, read N- to C-terminus: MANGPNYKIKHRRRREGKTNYYKRYVYVISKQIRFIVRITNKYVIVQIAKIDPKGDIMVASAHSSELTKKFEWKGDENNTPSAYLTGYLAALRAVKKGVTECVADIGLHVPSKGNKVFYAIKGAIDAGLKIPIGDISIENDRIKGEHIAKYAEKLKSENLDLYNKLFSRYLGRGLNPENLPSHFEEILNKIKSSGG.

It belongs to the universal ribosomal protein uL18 family. In terms of assembly, part of the 50S ribosomal subunit. Contacts the 5S and 23S rRNAs.

This is one of the proteins that bind and probably mediate the attachment of the 5S RNA into the large ribosomal subunit, where it forms part of the central protuberance. The protein is Large ribosomal subunit protein uL18 of Saccharolobus islandicus (strain Y.N.15.51 / Yellowstone #2) (Sulfolobus islandicus).